A 188-amino-acid chain; its full sequence is Trafficking protein particle complex subunit 5 (188 aa).

A Phosphoserine modification is found at S10.

The protein belongs to the TRAPP small subunits family. BET3 subfamily. Component of the multisubunit TRAPP (transport protein particle) complex, which includes at least TRAPPC2, TRAPPC2L, TRAPPC3, TRAPPC3L, TRAPPC4, TRAPPC5, TRAPPC8, TRAPPC9, TRAPPC10, TRAPPC11 and TRAPPC12.

The protein localises to the golgi apparatus. It is found in the cis-Golgi network. It localises to the endoplasmic reticulum. Functionally, may play a role in vesicular transport from endoplasmic reticulum to Golgi. This is Trafficking protein particle complex subunit 5 (Trappc5) from Mus musculus (Mouse).